The chain runs to 429 residues: Histidine--tRNA ligase (429 aa).

The protein belongs to the class-II aminoacyl-tRNA synthetase family. As to quaternary structure, homodimer.

The protein resides in the cytoplasm. It carries out the reaction tRNA(His) + L-histidine + ATP = L-histidyl-tRNA(His) + AMP + diphosphate + H(+). In Streptococcus pneumoniae (strain 70585), this protein is Histidine--tRNA ligase.